The following is a 64-amino-acid chain: Large ribosomal subunit protein bL35 (64 aa).

The protein belongs to the bacterial ribosomal protein bL35 family.

The polypeptide is Large ribosomal subunit protein bL35 (Streptomyces coelicolor (strain ATCC BAA-471 / A3(2) / M145)).